The sequence spans 55 residues: Large ribosomal subunit protein bL33 (55 aa).

It belongs to the bacterial ribosomal protein bL33 family.

This Proteus mirabilis (strain HI4320) protein is Large ribosomal subunit protein bL33.